We begin with the raw amino-acid sequence, 57 residues long: Large ribosomal subunit protein bL33 (57 aa).

This sequence belongs to the bacterial ribosomal protein bL33 family.

The sequence is that of Large ribosomal subunit protein bL33 from Shewanella halifaxensis (strain HAW-EB4).